The primary structure comprises 119 residues: Holo-[acyl-carrier-protein] synthase (119 aa).

Aspartate 8 and glutamate 58 together coordinate Mg(2+).

The protein belongs to the P-Pant transferase superfamily. AcpS family. The cofactor is Mg(2+).

It localises to the cytoplasm. It catalyses the reaction apo-[ACP] + CoA = holo-[ACP] + adenosine 3',5'-bisphosphate + H(+). Functionally, transfers the 4'-phosphopantetheine moiety from coenzyme A to a Ser of acyl-carrier-protein. This is Holo-[acyl-carrier-protein] synthase from Bacillus thuringiensis subsp. konkukian (strain 97-27).